The chain runs to 337 residues: Protein RecA (337 aa).

66 to 73 (GPESSGKT) contacts ATP.

This sequence belongs to the RecA family.

The protein localises to the cytoplasm. Its function is as follows. Can catalyze the hydrolysis of ATP in the presence of single-stranded DNA, the ATP-dependent uptake of single-stranded DNA by duplex DNA, and the ATP-dependent hybridization of homologous single-stranded DNAs. It interacts with LexA causing its activation and leading to its autocatalytic cleavage. This chain is Protein RecA, found in Mesomycoplasma hyopneumoniae (strain J / ATCC 25934 / NCTC 10110) (Mycoplasma hyopneumoniae).